The sequence spans 145 residues: Acidic phospholipase A2 homolog textilotoxin C chain (145 aa).

A signal peptide spans 1–19 (MHPAHLLVLLGVYVSLLGA). Residues 20–27 (ARIPPLPL) constitute a propeptide that is removed on maturation. 7 disulfide bridges follow: C38/C98, C54/C144, C56/C72, C71/C125, C78/C118, C87/C111, and C105/C116.

Belongs to the phospholipase A2 family. Group I subfamily. D49 sub-subfamily. As to quaternary structure, heterohexamer. 2 forms exist: 2 A or 2 B chains, 2 C chains and 2 covalently-linked D chains, and 1 A or 1 B, 1 C, 2 covalently-linked D chains and 2 differentially glycosylated covalently-linked D chains. Textilotoxin was originally described as pentameric. In terms of tissue distribution, expressed by the venom gland.

Its subcellular location is the secreted. Functionally, snake venom oligomeric phospholipase A2 that has potent presynaptic neurotoxicity. Chain C is not itself neurotoxic, but it is essential for the neurotoxicity of textilotoxin. Chain C possesses a very low phospholipase activity. The polypeptide is Acidic phospholipase A2 homolog textilotoxin C chain (Pseudonaja textilis (Eastern brown snake)).